The following is a 1220-amino-acid chain: Osmosensing histidine protein kinase SLN1 (1220 aa).

Topologically, residues 1 to 22 (MRFGLPSKLELTPPFRIGIRTQ) are cytoplasmic. The helical transmembrane segment at 23-46 (LTALVSIVALGSLIILAVTTGVYF) threads the bilayer. Residues 47-333 (TSNYKNLRSD…FLSPATKLAK (287 aa)) are Extracellular-facing. N-linked (GlcNAc...) asparagine glycans are attached at residues Asn100, Asn138, Asn142, Asn181, Asn224, and Asn272. Residues 334-354 (IITGTVIAIGVFVILLTLPLA) traverse the membrane as a helical segment. Topologically, residues 355–1220 (HWAVQPIVRL…AAYQGKKNNK (866 aa)) are cytoplasmic. 2 disordered regions span residues 414–433 (GSTT…GAAF) and 444–500 (NLGN…HILT). Residues 451–468 (SPPEEENKIPNNHTDAKI) show a composition bias toward basic and acidic residues. A Phosphoserine modification is found at Ser502. In terms of domain architecture, Histidine kinase spans 573-928 (NISHELRTPL…KFTFTLPLNQ (356 aa)). Position 576 is a phosphohistidine; by autocatalysis (His576). A phosphoserine mark is found at Ser758 and Ser833. Disordered stretches follow at residues 960-1016 (AKSI…DNGG) and 1040-1081 (NSLS…VKDD). The segment covering 965–984 (SRQSTSSVATPATNRSSLTN) has biased composition (polar residues). Residues 988 to 1000 (PEVRSKGKHETKD) are compositionally biased toward basic and acidic residues. Phosphoserine occurs at positions 1041 and 1044. The span at 1063-1075 (LQSTGTATSSRNI) shows a compositional bias: polar residues. A Response regulatory domain is found at 1089 to 1210 (KILVVEDNHV…KLKTILTEFC (122 aa)). Mg(2+)-binding residues include Glu1094, Asp1095, Asp1144, and Lys1195. 4-aspartylphosphate is present on Asp1144.

As to quaternary structure, interacts with DJP1, MOG1 and YPD1. In terms of processing, the phosphorelay mechanism involves the sequential transfer of a phosphate group from His-576 (H1) in the histidine kinase domain (transmitter domain) to Asp-1144 (D1) of the response regulatory domain (receiver domain). This transfer probably occurs between two SLN1 molecules, rather than intramolecularly. The phosphate group is further transferred to 'His-64' (H2) of YPD1 and finally to 'Asp-554' (D2) of SSK1 or 'Asp-427' (D2) of SKN7.

The protein localises to the cell membrane. The catalysed reaction is ATP + protein L-histidine = ADP + protein N-phospho-L-histidine.. Functionally, histidine kinase that acts as an osmosensor at the plasma membrane. Part of the bifurcated SLN1-YPD1-SKN7/SSK1 two-component regulatory system, which controls activity of the HOG1 pathway and gene expression in response to changes in the osmolarity of the extracellular environment. Under normal osmotic conditions, the histidine kinase autophosphorylates His-576. This phosphate is subsequently transferred to Asp-1144, from where it is relayed to 'His-64' of the phosphorelay intermediate protein YPD1. Under high osmolarity conditions, the histidine kinase is no longer active. In Saccharomyces cerevisiae (strain ATCC 204508 / S288c) (Baker's yeast), this protein is Osmosensing histidine protein kinase SLN1 (SLN1).